A 290-amino-acid polypeptide reads, in one-letter code: Cbb3-type cytochrome c oxidase subunit CcoP (290 aa).

Residues 1 to 22 (MSVKPTKQKPGEPPTTGHSWDG) are disordered. Topologically, residues 1–37 (MSVKPTKQKPGEPPTTGHSWDGIEEFDNPMPRWWLWT) are cytoplasmic. A helical transmembrane segment spans residues 38–58 (FYVTIVWAIGYSILYPAWPLI). The Periplasmic segment spans residues 59–290 (NGATNGLIGH…VYVHGLGGGE (232 aa)). Cytochrome c domains are found at residues 109-199 (YATN…LQIS) and 206-287 (ALSA…HGLG). Heme c is bound by residues Cys-122, Cys-125, His-126, Met-174, Cys-219, Cys-222, His-223, and Met-264.

The protein belongs to the CcoP / FixP family. Component of the cbb3-type cytochrome c oxidase at least composed of CcoN, CcoO, CcoQ and CcoP. The cofactor is heme c.

It is found in the cell inner membrane. It participates in energy metabolism; oxidative phosphorylation. Its function is as follows. C-type cytochrome. Part of the cbb3-type cytochrome c oxidase complex. CcoP subunit is required for transferring electrons from donor cytochrome c via its heme groups to CcoO subunit. From there, electrons are shuttled to the catalytic binuclear center of CcoN subunit where oxygen reduction takes place. The complex also functions as a proton pump. The protein is Cbb3-type cytochrome c oxidase subunit CcoP of Cereibacter sphaeroides (strain ATCC 17023 / DSM 158 / JCM 6121 / CCUG 31486 / LMG 2827 / NBRC 12203 / NCIMB 8253 / ATH 2.4.1.) (Rhodobacter sphaeroides).